The sequence spans 64 residues: Leader peptide SpeFL (64 aa).

An Ornithine recognition loop motif is present at residues 32 to 38; that stretch reads HIRRTRH. Arg35 provides a ligand contact to L-ornithine.

It belongs to the speF operon leader peptide family. Binds ornithine in stalled 70S ribosomes, blocking the upper two-thirds of the exit tunnel. Contacts 23S rRNA and ribosomal proteins L4 and L22.

A small protein (arrest peptide) encoded upstream of inducible ornithine carboxylase gene (speF) that controls expression of downstream genes (usually speF and potE) by transcriptional and translational attenuation. The polypeptide is Leader peptide SpeFL (Haemophilus influenzae (strain ATCC 51907 / DSM 11121 / KW20 / Rd)).